Reading from the N-terminus, the 227-residue chain is Cytochrome c oxidase subunit 2 (227 aa).

Over 1 to 14 the chain is Mitochondrial intermembrane; sequence MAYPFELGFQDATS. Residues 15-45 traverse the membrane as a helical segment; sequence PIMEELLHFHDHTLMIVFLISSLVLYIISLM. Residues 46-59 are Mitochondrial matrix-facing; it reads LTTKLTHTSTMDAQ. Residues 60–87 form a helical membrane-spanning segment; sequence EVETIWTILPAIILILIALPSLRVLYMM. The Mitochondrial intermembrane portion of the chain corresponds to 88–227; the sequence is DEINDPSLTV…HFENWSSSML (140 aa). Cu cation contacts are provided by His161, Cys196, Glu198, Cys200, His204, and Met207. Glu198 contributes to the Mg(2+) binding site.

It belongs to the cytochrome c oxidase subunit 2 family. Component of the cytochrome c oxidase (complex IV, CIV), a multisubunit enzyme composed of 14 subunits. The complex is composed of a catalytic core of 3 subunits MT-CO1, MT-CO2 and MT-CO3, encoded in the mitochondrial DNA, and 11 supernumerary subunits COX4I, COX5A, COX5B, COX6A, COX6B, COX6C, COX7A, COX7B, COX7C, COX8 and NDUFA4, which are encoded in the nuclear genome. The complex exists as a monomer or a dimer and forms supercomplexes (SCs) in the inner mitochondrial membrane with NADH-ubiquinone oxidoreductase (complex I, CI) and ubiquinol-cytochrome c oxidoreductase (cytochrome b-c1 complex, complex III, CIII), resulting in different assemblies (supercomplex SCI(1)III(2)IV(1) and megacomplex MCI(2)III(2)IV(2)). Found in a complex with TMEM177, COA6, COX18, COX20, SCO1 and SCO2. Interacts with TMEM177 in a COX20-dependent manner. Interacts with COX20. Interacts with COX16. The cofactor is Cu cation.

It is found in the mitochondrion inner membrane. It carries out the reaction 4 Fe(II)-[cytochrome c] + O2 + 8 H(+)(in) = 4 Fe(III)-[cytochrome c] + 2 H2O + 4 H(+)(out). Functionally, component of the cytochrome c oxidase, the last enzyme in the mitochondrial electron transport chain which drives oxidative phosphorylation. The respiratory chain contains 3 multisubunit complexes succinate dehydrogenase (complex II, CII), ubiquinol-cytochrome c oxidoreductase (cytochrome b-c1 complex, complex III, CIII) and cytochrome c oxidase (complex IV, CIV), that cooperate to transfer electrons derived from NADH and succinate to molecular oxygen, creating an electrochemical gradient over the inner membrane that drives transmembrane transport and the ATP synthase. Cytochrome c oxidase is the component of the respiratory chain that catalyzes the reduction of oxygen to water. Electrons originating from reduced cytochrome c in the intermembrane space (IMS) are transferred via the dinuclear copper A center (CU(A)) of subunit 2 and heme A of subunit 1 to the active site in subunit 1, a binuclear center (BNC) formed by heme A3 and copper B (CU(B)). The BNC reduces molecular oxygen to 2 water molecules using 4 electrons from cytochrome c in the IMS and 4 protons from the mitochondrial matrix. This is Cytochrome c oxidase subunit 2 (MT-CO2) from Sciurus carolinensis (Eastern gray squirrel).